A 343-amino-acid chain; its full sequence is Protein RecA (343 aa).

68–75 (GPESGGKT) contributes to the ATP binding site.

Belongs to the RecA family.

It localises to the cytoplasm. In terms of biological role, can catalyze the hydrolysis of ATP in the presence of single-stranded DNA, the ATP-dependent uptake of single-stranded DNA by duplex DNA, and the ATP-dependent hybridization of homologous single-stranded DNAs. It interacts with LexA causing its activation and leading to its autocatalytic cleavage. This is Protein RecA from Syntrophus aciditrophicus (strain SB).